The sequence spans 241 residues: Triosephosphate isomerase (241 aa).

9–11 (NWK) provides a ligand contact to substrate. His-96 functions as the Electrophile in the catalytic mechanism. Residue Glu-165 is the Proton acceptor of the active site. Residues Gly-171, Ser-204, and 225-226 (GG) contribute to the substrate site.

It belongs to the triosephosphate isomerase family. Homodimer.

The protein resides in the cytoplasm. It carries out the reaction D-glyceraldehyde 3-phosphate = dihydroxyacetone phosphate. Its pathway is carbohydrate biosynthesis; gluconeogenesis. It participates in carbohydrate degradation; glycolysis; D-glyceraldehyde 3-phosphate from glycerone phosphate: step 1/1. Involved in the gluconeogenesis. Catalyzes stereospecifically the conversion of dihydroxyacetone phosphate (DHAP) to D-glyceraldehyde-3-phosphate (G3P). In Prochlorococcus marinus (strain MIT 9515), this protein is Triosephosphate isomerase.